Here is a 439-residue protein sequence, read N- to C-terminus: Proline--tRNA ligase (439 aa).

The protein belongs to the class-II aminoacyl-tRNA synthetase family. ProS type 2 subfamily. As to quaternary structure, homodimer.

It localises to the cytoplasm. The catalysed reaction is tRNA(Pro) + L-proline + ATP = L-prolyl-tRNA(Pro) + AMP + diphosphate. Catalyzes the attachment of proline to tRNA(Pro) in a two-step reaction: proline is first activated by ATP to form Pro-AMP and then transferred to the acceptor end of tRNA(Pro). The polypeptide is Proline--tRNA ligase (Beijerinckia indica subsp. indica (strain ATCC 9039 / DSM 1715 / NCIMB 8712)).